Consider the following 290-residue polypeptide: Poly-beta-1,6-N-acetyl-D-glucosamine N-deacetylase (290 aa).

The first 28 residues, 1–28, serve as a signal peptide directing secretion; that stretch reads MKYRKLIILVLSILIILPVSTLDGHHIA. Residues 114-290 enclose the NodB homology domain; that stretch reads RSVWINFDDM…KRWDGFHEKD (177 aa).

It belongs to the polysaccharide deacetylase family.

The protein resides in the secreted. The protein localises to the cell wall. Catalyzes the N-deacetylation of poly-beta-1,6-N-acetyl-D-glucosamine (PNAG, also referred to as PIA), a biofilm adhesin polysaccharide. N-deacetylation is crucial for attachment of the polysaccharide to the bacterial cell surface; it leads to the introduction of positive charges in the otherwise neutral PIA polymer, allowing electrostatic interactions. The sequence is that of Poly-beta-1,6-N-acetyl-D-glucosamine N-deacetylase (icaB) from Staphylococcus aureus (strain Mu50 / ATCC 700699).